We begin with the raw amino-acid sequence, 277 residues long: Probable diphthine methyl ester synthase (277 aa).

S-adenosyl-L-methionine contacts are provided by residues L9, D89, G92, 117–118 (SV), L168, L227, and H252.

The protein belongs to the diphthine synthase family.

It catalyses the reaction 2-[(3S)-amino-3-carboxypropyl]-L-histidyl-[translation elongation factor 2] + 4 S-adenosyl-L-methionine = diphthine methyl ester-[translation elongation factor 2] + 4 S-adenosyl-L-homocysteine + 3 H(+). The protein operates within protein modification; peptidyl-diphthamide biosynthesis. In terms of biological role, S-adenosyl-L-methionine-dependent methyltransferase that catalyzes four methylations of the modified target histidine residue in translation elongation factor 2 (EF-2), to form an intermediate called diphthine methyl ester. The four successive methylation reactions represent the second step of diphthamide biosynthesis. The sequence is that of Probable diphthine methyl ester synthase from Arabidopsis thaliana (Mouse-ear cress).